Reading from the N-terminus, the 404-residue chain is Cysteine desulfurase IscS (404 aa).

Pyridoxal 5'-phosphate contacts are provided by residues 75-76, Asn155, Gln183, and 203-205; these read AT and SAH. An N6-(pyridoxal phosphate)lysine modification is found at Lys206. Thr243 provides a ligand contact to pyridoxal 5'-phosphate. Cys328 (cysteine persulfide intermediate) is an active-site residue. Cys328 contacts [2Fe-2S] cluster.

This sequence belongs to the class-V pyridoxal-phosphate-dependent aminotransferase family. NifS/IscS subfamily. As to quaternary structure, homodimer. Forms a heterotetramer with IscU, interacts with other sulfur acceptors. Pyridoxal 5'-phosphate is required as a cofactor.

It is found in the cytoplasm. It carries out the reaction (sulfur carrier)-H + L-cysteine = (sulfur carrier)-SH + L-alanine. It functions in the pathway cofactor biosynthesis; iron-sulfur cluster biosynthesis. Functionally, master enzyme that delivers sulfur to a number of partners involved in Fe-S cluster assembly, tRNA modification or cofactor biosynthesis. Catalyzes the removal of elemental sulfur atoms from cysteine to produce alanine. Functions as a sulfur delivery protein for Fe-S cluster synthesis onto IscU, an Fe-S scaffold assembly protein, as well as other S acceptor proteins. This is Cysteine desulfurase IscS from Buchnera aphidicola subsp. Schizaphis graminum (strain Sg).